Here is a 417-residue protein sequence, read N- to C-terminus: CinA-like protein (417 aa).

The protein belongs to the CinA family.

The protein is CinA-like protein of Microcystis aeruginosa (strain NIES-843 / IAM M-2473).